We begin with the raw amino-acid sequence, 1409 residues long: Adhesion and penetration protein autotransporter (1409 aa).

The signal sequence occupies residues 1–25; sequence MKKTVFRLNFLTACVSLGIASQAWA. Residues 26-294 enclose the Peptidase S6 domain; sequence GHTYFGIDYQ…LIREEWFYNE (269 aa). Ser250 is a catalytic residue. Disordered regions lie at residues 866–888 and 1016–1078; these read YSAS…TPTS and AKQV…SKRA. Residues 1057 to 1067 are compositionally biased toward polar residues; the sequence is VEQTTETQTSK. Residues 1068-1077 are compositionally biased toward basic residues; sequence PKTKKGRSKR. An Autotransporter domain is found at 1156–1409; that stretch reads VDQAQSALWT…NVGVKLGYRW (254 aa).

Its subcellular location is the periplasm. The protein localises to the secreted. It is found in the cell surface. It localises to the cell outer membrane. Its function is as follows. Probable protease; promotes adherence and invasion by directly binding to a host cell structure. This chain is Adhesion and penetration protein autotransporter (hap), found in Haemophilus influenzae (strain ATCC 51907 / DSM 11121 / KW20 / Rd).